A 485-amino-acid polypeptide reads, in one-letter code: Zinc finger SWIM domain-containing protein 1 (485 aa).

An SWIM-type zinc finger spans residues 363-405 (MNIQILEDTHKVQPQPPASCSCYFNQAFHLPCRHILAMLSARR).

This chain is Zinc finger SWIM domain-containing protein 1 (ZSWIM1), found in Homo sapiens (Human).